Here is a 77-residue protein sequence, read N- to C-terminus: Major outer membrane lipoprotein Lpp (77 aa).

The N-terminal stretch at 1–19 (MNRTKLVLGAVILGSHSAG) is a signal peptide. Residue C20 is the site of N-palmitoyl cysteine attachment. A lipid anchor (S-diacylglycerol cysteine) is attached at C20. 2 repeats span residues 23–33 (NAKIDQLSSDV) and 37–47 (NAKVDQLSNDV). Positions 26 to 74 (IDQLSSDVQTLNAKVDQLSNDVNAMRSDVQAAKDDAARANQRLDNQAHA) form a coiled coil. Residues 56–77 (AAKDDAARANQRLDNQAHAYKK) are disordered. The residue at position 77 (K77) is an N6-murein peptidoglycan lysine.

Belongs to the Lpp family. Homotrimer.

The protein resides in the cell outer membrane. It localises to the secreted. The protein localises to the cell wall. Its function is as follows. A highly abundant outer membrane lipoprotein that controls the distance between the inner and outer membranes. The only protein known to be covalently linked to the peptidoglycan network (PGN). Also non-covalently binds the PGN. The link between the cell outer membrane and PGN contributes to maintenance of the structural and functional integrity of the cell envelope, and maintains the correct distance between the PGN and the outer membrane. In Serratia marcescens, this protein is Major outer membrane lipoprotein Lpp.